The sequence spans 209 residues: PRA1 family protein E (209 aa).

Positions 1 to 20 (MNQKPPPYGYGGAGGGGVGP) are disordered. The span at 9-19 (GYGGAGGGGVG) shows a compositional bias: gly residues. Transmembrane regions (helical) follow at residues 90 to 110 (IVFL…VVFI), 132 to 152 (VDDK…LVYT), and 155 to 175 (GENV…HGAF).

The protein belongs to the PRA1 family. Interacts with PRA1B1, PRA1B2, PRA1B3, PRA1B4, PRA1B5 and PRA1B6. In terms of tissue distribution, expressed in hypocotyls, roots, lateral roots, columella cells, leaves and shoot apex.

It is found in the endosome membrane. May be involved in both secretory and endocytic intracellular trafficking in the endosomal/prevacuolar compartments. This is PRA1 family protein E (PRA1E) from Arabidopsis thaliana (Mouse-ear cress).